A 146-amino-acid polypeptide reads, in one-letter code: Large-conductance mechanosensitive channel (146 aa).

2 helical membrane passes run 12 to 32 (AFAMRGNVIDMAVGVIIGGAF) and 83 to 103 (GNFLQATFDFIIIAFSIFLFI).

It belongs to the MscL family. Homopentamer.

The protein resides in the cell inner membrane. Functionally, channel that opens in response to stretch forces in the membrane lipid bilayer. May participate in the regulation of osmotic pressure changes within the cell. This chain is Large-conductance mechanosensitive channel, found in Phocaeicola vulgatus (strain ATCC 8482 / DSM 1447 / JCM 5826 / CCUG 4940 / NBRC 14291 / NCTC 11154) (Bacteroides vulgatus).